The following is a 344-amino-acid chain: E3 ubiquitin-protein ligase RING2-A (344 aa).

The tract at residues 2 to 181 (ATPVNAQCSS…EDNCDSRSHV (180 aa)) is interaction with HIP2. The segment at 48–88 (CPICLDMLKNTMTTKECLHRFCSDCIVTALRSGNKECPTCR) adopts an RING-type zinc-finger fold. The segment at 90–95 (KLVSKR) is interaction with nucleosomes via an acidic patch on histone H2A and histone H2B. The segment at 148 to 230 (QAMHRAQRVR…DPPGGGETGS (83 aa)) is disordered. A compositionally biased stretch (polar residues) spans 180-192 (HVSNPSVHSNQEA).

Component of chromatin-associated Polycomb (PcG) complexes. Component of a PRC1-like complex. Component of some MLL1/MLL complex.

It localises to the nucleus. It is found in the cytoplasm. The protein localises to the chromosome. The enzyme catalyses S-ubiquitinyl-[E2 ubiquitin-conjugating enzyme]-L-cysteine + [acceptor protein]-L-lysine = [E2 ubiquitin-conjugating enzyme]-L-cysteine + N(6)-ubiquitinyl-[acceptor protein]-L-lysine.. It functions in the pathway protein modification; protein ubiquitination. Its function is as follows. E3 ubiquitin-protein ligase that mediates monoubiquitination of 'Lys-119' of histone H2A (H2AK119Ub), thereby playing a central role in histone code and gene regulation. H2AK119Ub gives a specific tag for epigenetic transcriptional repression. Essential component of a Polycomb group (PcG) multiprotein PRC1-like complex, a complex class required to maintain the transcriptionally repressive state of many genes, including Hox genes, throughout development. PcG PRC1 complex acts via chromatin remodeling and modification of histones, rendering chromatin heritably changed in its expressibility. The chain is E3 ubiquitin-protein ligase RING2-A (rnf2-a) from Xenopus laevis (African clawed frog).